A 303-amino-acid chain; its full sequence is Putative 1-phosphofructokinase (303 aa).

ATP contacts are provided by residues 217–222 (SDGDKG) and 249–250 (GD). D250 acts as the Proton acceptor in catalysis.

This sequence belongs to the carbohydrate kinase PfkB family.

It catalyses the reaction beta-D-fructose 1-phosphate + ATP = beta-D-fructose 1,6-bisphosphate + ADP + H(+). Catalyzes the ATP-dependent phosphorylation of fructose-l-phosphate to fructose-l,6-bisphosphate. The chain is Putative 1-phosphofructokinase (fruK) from Mycoplasma genitalium (strain ATCC 33530 / DSM 19775 / NCTC 10195 / G37) (Mycoplasmoides genitalium).